Consider the following 286-residue polypeptide: Small ribosomal subunit protein uS2 (286 aa).

The tract at residues 257–286 (KDNKSNKSNTINADENIKESDLIGGSNNEG) is disordered.

It belongs to the universal ribosomal protein uS2 family.

In Ehrlichia ruminantium (strain Gardel), this protein is Small ribosomal subunit protein uS2.